Consider the following 60-residue polypeptide: Homeobox protein engrailed-like (60 aa).

Residues 1-41 (GEQLCRLRAEFQASRYLTEERRTALARELRLNEAQIKIWFQ) constitute a DNA-binding region (homeobox).

The protein belongs to the engrailed homeobox family.

It localises to the nucleus. The sequence is that of Homeobox protein engrailed-like from Lampetra planeri (Brook lamprey).